The chain runs to 613 residues: Putative two-component response regulator ARR21 (613 aa).

A Response regulatory domain is found at 17–131 (NVMVVDDDHV…DLTKIYQFAL (115 aa)). Aspartate 68 carries the 4-aspartylphosphate modification. Positions 178 to 195 (KSDSRTVNSTNGSCVSTD) are enriched in polar residues. Residues 178 to 223 (KSDSRTVNSTNGSCVSTDGSRKNRKRKPNGGPSDDGESMSQPAKKK) form a disordered region. Positions 221–224 (KKKK) match the Nuclear localization signal motif. A DNA-binding region (myb-like GARP) is located at residues 224-274 (KIQWTDSLHDLFLQAIRHIGLDKAVPKKILAFMSVPYLTRENVASHLQKYR).

It belongs to the ARR family. Type-B subfamily. Binds the target DNA as a monomer. In terms of processing, two-component system major event consists of a His-to-Asp phosphorelay between a sensor histidine kinase (HK) and a response regulator (RR). In plants, the His-to-Asp phosphorelay involves an additional intermediate named Histidine-containing phosphotransfer protein (HPt). This multistep phosphorelay consists of a His-Asp-His-Asp sequential transfer of a phosphate group between first a His and an Asp of the HK protein, followed by the transfer to a conserved His of the HPt protein and finally the transfer to an Asp in the receiver domain of the RR protein. In terms of tissue distribution, mainly expressed in siliques. Also found in germinating seedlings, stems, flowers and roots, but not in rosette leaves.

Its subcellular location is the nucleus. Its function is as follows. Putative transcriptional activator that binds specifically to the DNA sequence 5'-[AG]GATT-3'. Functions as a response regulator involved in His-to-Asp phosphorelay signal transduction system. Phosphorylation of the Asp residue in the receiver domain activates the ability of the protein to promote the transcription of target genes. Could directly activate some type-A response regulators in response to cytokinins. The chain is Putative two-component response regulator ARR21 (ARR21) from Arabidopsis thaliana (Mouse-ear cress).